The chain runs to 204 residues: Large ribosomal subunit protein uL10 (204 aa).

Residues 170–204 (AADPSVIGGAGEASDQEPKTTETPEASAAQDNTNE) form a disordered region. Positions 192–204 (TPEASAAQDNTNE) are enriched in polar residues.

This sequence belongs to the universal ribosomal protein uL10 family. Part of the ribosomal stalk of the 50S ribosomal subunit. The N-terminus interacts with L11 and the large rRNA to form the base of the stalk. The C-terminus forms an elongated spine to which L12 dimers bind in a sequential fashion forming a multimeric L10(L12)X complex.

In terms of biological role, forms part of the ribosomal stalk, playing a central role in the interaction of the ribosome with GTP-bound translation factors. The chain is Large ribosomal subunit protein uL10 from Cutibacterium acnes (strain DSM 16379 / KPA171202) (Propionibacterium acnes).